A 211-amino-acid chain; its full sequence is MALLTAKTFSLQFNNKRRIKRPYYPRKALLCYQLTPQNGSTPTRGYFKNKKKCHAEIRFINEIKSMGLDETQCYQVTCYLTWSPCPSCVRELVAFIKAHDHLNLRIFASRLYCHWCRRQQEGLRLLCGSQVPVEVMGSREFADCWENFVDHEKPLSFNPSEMLEELDKNSRAIKRRLERIKQSWSVDVLENGLRSLQLGPVSSSLSRSNSR.

The CMP/dCMP-type deaminase domain maps to 4 to 126 (LTAKTFSLQF…RRQQEGLRLL (123 aa)). His54 serves as a coordination point for Zn(2+). Glu56 (proton donor) is an active-site residue. Residues Cys85 and Cys88 each contribute to the Zn(2+) site.

Belongs to the cytidine and deoxycytidylate deaminase family. As to quaternary structure, homodimer. Zn(2+) is required as a cofactor.

It is found in the cytoplasm. It carries out the reaction a 2'-deoxycytidine in single-stranded DNA + H2O + H(+) = a 2'-deoxyuridine in single-stranded DNA + NH4(+). In terms of biological role, DNA deaminase (cytidine deaminase) which may act as an inhibitor of retrovirus replication and retrotransposon mobility via deaminase-dependent and -independent mechanisms. The protein is DNA dC-&gt;dU-editing enzyme APOBEC-3H of Pongo pygmaeus (Bornean orangutan).